Consider the following 977-residue polypeptide: Disks large-associated protein 1 (977 aa).

Disordered regions lie at residues 150–203 (TKSH…GWWS) and 349–371 (KAMG…KVAA). Residues Ser169, Ser356, Ser359, Ser362, Ser366, Ser383, Ser412, Ser415, Ser419, Ser422, Ser431, Ser503, Ser510, and Ser562 each carry the phosphoserine modification. At Thr563 the chain carries Phosphothreonine. Residues Ser565 and Ser589 each carry the phosphoserine modification. Thr590 carries the phosphothreonine modification. Phosphoserine occurs at positions 592 and 595. Interaction with DYL2 regions lie at residues 650–661 (LSIGIQVDDAEE) and 672–683 (SKFQSVGVQVEE). Residues 899-965 (WKQMDPLDKK…QNSATESAES (67 aa)) form a disordered region. Composition is skewed to basic and acidic residues over residues 903-912 (DPLDKKERRA) and 928-943 (IRER…EARK). At Ser932 the chain carries Phosphoserine. Over residues 954-963 (VRQNSATESA) the composition is skewed to polar residues. The PDZ-binding motif lies at 975–977 (TRL).

This sequence belongs to the SAPAP family. In terms of assembly, interacts with guanylate kinase-like domain of DLG1, DLG2, DLG3, DLG4 and AIP1. Interacts with the PDZ domain of SHANK1, SHANK2 and SHANK3. Found in a complex with DLG4 and SHANK1, SHANK2 or SHANK3. Found in a complex with DLG4 and BEGAIN. Interacts with DYL2 and LRFN1. Interacts with MPP2 (via the SH3-Guanylate kinase-like sub-module). Ubiquitinated by TRIM3; leading to proteasomal degradation. As to expression, expressed in brain.

It localises to the cell membrane. The protein resides in the postsynaptic density. Its subcellular location is the synapse. Part of the postsynaptic scaffold in neuronal cells. This Homo sapiens (Human) protein is Disks large-associated protein 1 (DLGAP1).